Here is a 254-residue protein sequence, read N- to C-terminus: RNA polymerase sigma factor SigI8 (254 aa).

The short motif at 61–74 (DEYSIALIAFNEAI) is the Polymerase core binding element. Positions 209 to 228 (YKELTERFNLCRRTLEKNRK) form a DNA-binding region, H-T-H motif.

The protein belongs to the sigma-70 factor family. SigI subfamily. In terms of assembly, interacts with RsgI8.

The protein resides in the cytoplasm. Its activity is regulated as follows. Negatively regulated by the anti-sigma-I factor RsgI8. Its function is as follows. Sigma factors are initiation factors that promote the attachment of RNA polymerase to specific initiation sites and are then released. This chain is RNA polymerase sigma factor SigI8, found in Acetivibrio thermocellus (strain ATCC 27405 / DSM 1237 / JCM 9322 / NBRC 103400 / NCIMB 10682 / NRRL B-4536 / VPI 7372) (Clostridium thermocellum).